Reading from the N-terminus, the 212-residue chain is Glycerol-3-phosphate acyltransferase (212 aa).

The next 5 helical transmembrane spans lie at 9–29, 67–87, 95–115, 128–148, and 168–190; these read AACL…GYLL, GPAL…VLLA, WLQV…VWLG, MFLG…MAVI, and LMVV…LMVL.

The protein belongs to the PlsY family. In terms of assembly, probably interacts with PlsX.

Its subcellular location is the cell inner membrane. It catalyses the reaction an acyl phosphate + sn-glycerol 3-phosphate = a 1-acyl-sn-glycero-3-phosphate + phosphate. Its pathway is lipid metabolism; phospholipid metabolism. Catalyzes the transfer of an acyl group from acyl-phosphate (acyl-PO(4)) to glycerol-3-phosphate (G3P) to form lysophosphatidic acid (LPA). This enzyme utilizes acyl-phosphate as fatty acyl donor, but not acyl-CoA or acyl-ACP. This is Glycerol-3-phosphate acyltransferase from Parasynechococcus marenigrum (strain WH8102).